We begin with the raw amino-acid sequence, 471 residues long: Eremophilane O-acetyltransferase ORF8 (471 aa).

It belongs to the fumigaclavine B O-acetyltransferase family. In terms of assembly, monomer.

The protein operates within sesquiterpene biosynthesis. Its function is as follows. O-acetyltransferase; part of the gene cluster that mediates the biosynthesis of PR-toxin, a bicyclic sesquiterpene belonging to the eremophilane class and acting as a mycotoxin. The first step of the pathway is catalyzed by the aristolochene synthase which performs the cyclization of trans,trans-farnesyl diphosphate (FPP) to the bicyclic sesquiterpene aristolochene. Following the formation of aristolochene, the non-oxygenated aristolochene is converted to the trioxygenated intermediate eremofortin B, via 7-epi-neopetasone. This conversion appears to involve three enzymes, a hydroxysterol oxidase-like enzyme, the quinone-oxidase prx3 that forms the quinone-type-structure in the bicyclic nucleus of aristolochene with the C8-oxo group and the C-3 hydroxyl group, and the P450 monooxygenase ORF6 that introduces the epoxide at the double bond between carbons 1 and 2. No monoxy or dioxy-intermediates have been reported to be released to the broth, so these three early oxidative reactions may be coupled together. Eremofortin B is further oxidized by another P450 monooxygenase, that introduces a second epoxide between carbons 7 and 11 prior to acetylation to eremofortin A by the acetyltransferase ORF8. The second epoxidation may be performed by a second P450 monooxygenase. After the acetylation step, eremofortin A is converted to eremofortin C and then to PR-toxin. First the conversion of eremofortin A to eremofortin C proceeds by oxidation of the side chain of the molecule at C-12 and is catalyzed by the short-chain oxidoreductase prx1. The cytochrome P450 monooxygenase ORF6 is probably also involved in this step. The primary alcohol formed at C-12 is finally oxidized by the short-chain alcohol dehydrogenase prx4 that forms PR-toxin. The protein is Eremophilane O-acetyltransferase ORF8 of Penicillium roqueforti (strain FM164).